The primary structure comprises 396 residues: Elongation factor Tu (396 aa).

A tr-type G domain is found at 10 to 206; it reads KPHVNIGTIG…AVDNYIPEPE (197 aa). Residues 19–26 form a G1 region; that stretch reads GHVDHGKT. Residue 19–26 coordinates GTP; it reads GHVDHGKT. Thr-26 is a Mg(2+) binding site. The tract at residues 60-64 is G2; the sequence is GITIA. Positions 81 to 84 are G3; sequence DCPG. Residues 81–85 and 136–139 each bind GTP; these read DCPGH and NKAD. Residues 136 to 139 are G4; sequence NKAD. The G5 stretch occupies residues 174–176; that stretch reads SAL.

This sequence belongs to the TRAFAC class translation factor GTPase superfamily. Classic translation factor GTPase family. EF-Tu/EF-1A subfamily. As to quaternary structure, monomer.

The protein localises to the cytoplasm. It catalyses the reaction GTP + H2O = GDP + phosphate + H(+). GTP hydrolase that promotes the GTP-dependent binding of aminoacyl-tRNA to the A-site of ribosomes during protein biosynthesis. This is Elongation factor Tu from Geobacter sulfurreducens (strain ATCC 51573 / DSM 12127 / PCA).